Here is a 760-residue protein sequence, read N- to C-terminus: Mitochondrial intermediate peptidase (760 aa).

The N-terminal 19 residues, 1–19 (MLARSVRTLVVSPKTVFRF), are a transit peptide targeting the mitochondrion. A Zn(2+)-binding site is contributed by His543. Residue Glu544 is part of the active site. His547 provides a ligand contact to Zn(2+).

Belongs to the peptidase M3 family. Zn(2+) serves as cofactor.

Its subcellular location is the mitochondrion matrix. It catalyses the reaction Release of an N-terminal octapeptide as second stage of processing of some proteins imported into the mitochondrion.. In terms of biological role, cleaves proteins, imported into the mitochondrion, to their mature size. While most mitochondrial precursor proteins are processed to the mature form in one step by mitochondrial processing peptidase (MPP), the sequential cleavage by MIP of an octapeptide after initial processing by MPP is a required step for a subgroup of nuclear-encoded precursor proteins destined for the matrix or the inner membrane. This is Mitochondrial intermediate peptidase (OCT1) from Leucoagaricus gongylophorus (Leaf-cutting ant fungus).